The sequence spans 304 residues: Oxygen-dependent coproporphyrinogen-III oxidase (304 aa).

Position 94 (Ser-94) interacts with substrate. His-98 and His-108 together coordinate a divalent metal cation. His-108 (proton donor) is an active-site residue. 110-112 (NVR) is a substrate binding site. 2 residues coordinate a divalent metal cation: His-147 and His-177. An important for dimerization region spans residues 242–277 (YVEFNLVYDRGTLFGLQTGGRTESILMSMPPLVRWE). 260-262 (GGR) provides a ligand contact to substrate.

This sequence belongs to the aerobic coproporphyrinogen-III oxidase family. Homodimer. Requires a divalent metal cation as cofactor.

It is found in the cytoplasm. The enzyme catalyses coproporphyrinogen III + O2 + 2 H(+) = protoporphyrinogen IX + 2 CO2 + 2 H2O. It participates in porphyrin-containing compound metabolism; protoporphyrin-IX biosynthesis; protoporphyrinogen-IX from coproporphyrinogen-III (O2 route): step 1/1. Functionally, involved in the heme biosynthesis. Catalyzes the aerobic oxidative decarboxylation of propionate groups of rings A and B of coproporphyrinogen-III to yield the vinyl groups in protoporphyrinogen-IX. In Shewanella halifaxensis (strain HAW-EB4), this protein is Oxygen-dependent coproporphyrinogen-III oxidase.